A 111-amino-acid polypeptide reads, in one-letter code: RNA polymerase-binding protein RbpA (111 aa).

It belongs to the RNA polymerase-binding protein RbpA family. As to quaternary structure, forms a complex with the RNAP catalytic core and with free principal sigma factors.

Functionally, binds to RNA polymerase (RNAP), stimulating transcription from principal, but not alternative sigma factor promoters. In Mycobacterium tuberculosis (strain CDC 1551 / Oshkosh), this protein is RNA polymerase-binding protein RbpA.